A 433-amino-acid chain; its full sequence is Serine--tRNA ligase (433 aa).

L-serine is bound at residue 235-237 (TSE). 266-268 (RSE) contacts ATP. L-serine is bound at residue Glu289. Position 353–356 (353–356 (EISS)) interacts with ATP. An L-serine-binding site is contributed by Ser388.

The protein belongs to the class-II aminoacyl-tRNA synthetase family. Type-1 seryl-tRNA synthetase subfamily. As to quaternary structure, homodimer. The tRNA molecule binds across the dimer.

It is found in the cytoplasm. The catalysed reaction is tRNA(Ser) + L-serine + ATP = L-seryl-tRNA(Ser) + AMP + diphosphate + H(+). It catalyses the reaction tRNA(Sec) + L-serine + ATP = L-seryl-tRNA(Sec) + AMP + diphosphate + H(+). It participates in aminoacyl-tRNA biosynthesis; selenocysteinyl-tRNA(Sec) biosynthesis; L-seryl-tRNA(Sec) from L-serine and tRNA(Sec): step 1/1. Its function is as follows. Catalyzes the attachment of serine to tRNA(Ser). Is also able to aminoacylate tRNA(Sec) with serine, to form the misacylated tRNA L-seryl-tRNA(Sec), which will be further converted into selenocysteinyl-tRNA(Sec). The protein is Serine--tRNA ligase of Burkholderia thailandensis (strain ATCC 700388 / DSM 13276 / CCUG 48851 / CIP 106301 / E264).